The chain runs to 372 residues: tRNA-specific 2-thiouridylase MnmA (372 aa).

Residues Gly-11–Ser-18 and Met-37 contribute to the ATP site. The interval Asn-97–Asp-99 is interaction with target base in tRNA. Residue Cys-102 is the Nucleophile of the active site. A disulfide bridge links Cys-102 with Cys-199. Residue Gly-126 participates in ATP binding. The interaction with tRNA stretch occupies residues Lys-149–Gln-151. The Cysteine persulfide intermediate role is filled by Cys-199. The segment at Arg-309–Tyr-310 is interaction with tRNA.

The protein belongs to the MnmA/TRMU family.

The protein localises to the cytoplasm. The enzyme catalyses S-sulfanyl-L-cysteinyl-[protein] + uridine(34) in tRNA + AH2 + ATP = 2-thiouridine(34) in tRNA + L-cysteinyl-[protein] + A + AMP + diphosphate + H(+). Functionally, catalyzes the 2-thiolation of uridine at the wobble position (U34) of tRNA, leading to the formation of s(2)U34. The polypeptide is tRNA-specific 2-thiouridylase MnmA (Staphylococcus aureus (strain Mu50 / ATCC 700699)).